A 643-amino-acid chain; its full sequence is Beta-1,3-galactosyltransferase GALT1 (643 aa).

At 1–6 the chain is on the cytoplasmic side; the sequence is MKRFYG. Residues 7–23 form a helical; Signal-anchor for type II membrane protein membrane-spanning segment; it reads GLLVVSMCMFLTVYRYV. The Lumenal segment spans residues 24-643; the sequence is DLNTPVEKPY…TKRSLCCREW (620 aa). Asn-45, Asn-87, Asn-144, Asn-162, Asn-277, Asn-287, and Asn-508 each carry an N-linked (GlcNAc...) asparagine glycan. Positions 171 to 364 constitute a Galectin domain; sequence LKLQIPCGLT…DFRLISILAS (194 aa).

This sequence belongs to the glycosyltransferase 31 family. As to quaternary structure, interacts with GMII. Requires Mn(2+) as cofactor. Expressed in stems and siliques.

The protein localises to the golgi apparatus membrane. It functions in the pathway protein modification; protein glycosylation. In terms of biological role, beta-1,3-galactosyltransferase that transfers galactose from UDP-galactose to substrates with a terminal beta-N-acetylglucosamine (beta-GlcNAc) residue. Involved in the biosynthesis of N-glycans containing Lewis a structures (with the combination of FUT13). This Arabidopsis thaliana (Mouse-ear cress) protein is Beta-1,3-galactosyltransferase GALT1.